The primary structure comprises 462 residues: UDP-N-acetylmuramoylalanine--D-glutamate ligase (462 aa).

125–131 (GSDGKTT) is an ATP binding site.

It belongs to the MurCDEF family.

Its subcellular location is the cytoplasm. It carries out the reaction UDP-N-acetyl-alpha-D-muramoyl-L-alanine + D-glutamate + ATP = UDP-N-acetyl-alpha-D-muramoyl-L-alanyl-D-glutamate + ADP + phosphate + H(+). Its pathway is cell wall biogenesis; peptidoglycan biosynthesis. Its function is as follows. Cell wall formation. Catalyzes the addition of glutamate to the nucleotide precursor UDP-N-acetylmuramoyl-L-alanine (UMA). This is UDP-N-acetylmuramoylalanine--D-glutamate ligase from Clostridium acetobutylicum (strain ATCC 824 / DSM 792 / JCM 1419 / IAM 19013 / LMG 5710 / NBRC 13948 / NRRL B-527 / VKM B-1787 / 2291 / W).